A 124-amino-acid polypeptide reads, in one-letter code: Fluoride-specific ion channel FluC (124 aa).

3 helical membrane-spanning segments follow: residues 36–56 (VGTM…VVVL), 63–83 (YAPF…AFSL), and 99–119 (AYVG…MAAV). Na(+) is bound by residues glycine 73 and threonine 76.

The protein belongs to the fluoride channel Fluc/FEX (TC 1.A.43) family.

It is found in the cell inner membrane. It carries out the reaction fluoride(in) = fluoride(out). Na(+) is not transported, but it plays an essential structural role and its presence is essential for fluoride channel function. Functionally, fluoride-specific ion channel. Important for reducing fluoride concentration in the cell, thus reducing its toxicity. In Cereibacter sphaeroides (strain ATCC 17029 / ATH 2.4.9) (Rhodobacter sphaeroides), this protein is Fluoride-specific ion channel FluC.